The primary structure comprises 325 residues: ATP-dependent (S)-NAD(P)H-hydrate dehydratase (325 aa).

Positions 9–315 (LLKKVYNMVP…EHVHTAFLNV (307 aa)) constitute a YjeF C-terminal domain. Residues G119 and 172–178 (NVVEFGR) contribute to the (6S)-NADPHX site. Residues 211 to 215 (KGAKD) and 230 to 239 (GGLKRSGGQG) each bind ATP. Residue D240 participates in (6S)-NADPHX binding.

This sequence belongs to the NnrD/CARKD family. Mg(2+) is required as a cofactor.

The protein localises to the cytoplasm. The catalysed reaction is (6S)-NADHX + ATP = ADP + phosphate + NADH + H(+). The enzyme catalyses (6S)-NADPHX + ATP = ADP + phosphate + NADPH + H(+). Catalyzes the dehydration of the S-form of NAD(P)HX at the expense of ATP, which is converted to ADP. Together with NAD(P)HX epimerase, which catalyzes the epimerization of the S- and R-forms, the enzyme allows the repair of both epimers of NAD(P)HX, a damaged form of NAD(P)H that is a result of enzymatic or heat-dependent hydration. This is ATP-dependent (S)-NAD(P)H-hydrate dehydratase from Phaeosphaeria nodorum (strain SN15 / ATCC MYA-4574 / FGSC 10173) (Glume blotch fungus).